We begin with the raw amino-acid sequence, 209 residues long: Uracil phosphoribosyltransferase (209 aa).

5-phospho-alpha-D-ribose 1-diphosphate is bound by residues arginine 79, arginine 104, and 131–139; that span reads DPMLATGNS. Uracil is bound by residues isoleucine 194 and 199-201; that span reads GDA. 5-phospho-alpha-D-ribose 1-diphosphate is bound at residue aspartate 200.

Belongs to the UPRTase family. It depends on Mg(2+) as a cofactor.

It carries out the reaction UMP + diphosphate = 5-phospho-alpha-D-ribose 1-diphosphate + uracil. It functions in the pathway pyrimidine metabolism; UMP biosynthesis via salvage pathway; UMP from uracil: step 1/1. Allosterically activated by GTP. In terms of biological role, catalyzes the conversion of uracil and 5-phospho-alpha-D-ribose 1-diphosphate (PRPP) to UMP and diphosphate. The sequence is that of Uracil phosphoribosyltransferase from Rhizobium rhizogenes (strain K84 / ATCC BAA-868) (Agrobacterium radiobacter).